We begin with the raw amino-acid sequence, 473 residues long: H(+)/Cl(-) exchange transporter ClcA (473 aa).

Residues 1-32 lie on the Cytoplasmic side of the membrane; sequence MKTDTSTFLAQQIVRLRRRDQIRRLMQRDKTP. The chain crosses the membrane as a helical span at residues 33 to 69; that stretch reads LAILFMAAVVGTLTGLVGVAFEKTVSWVQNMRIGALV. Residues 70–76 are Periplasmic-facing; it reads QVADHAF. Residues 77-100 traverse the membrane as a helical segment; it reads LLWPLAFILSALLAMVGYFLVRKF. Positions 106–110 match the Selectivity filter part_1 motif; that stretch reads GSGIP. S107 provides a ligand contact to chloride. Residues 109-116 constitute an intramembrane region (helical); it reads IPEIEGAL. Residues 117–123 are Cytoplasmic-facing; the sequence is EELRPVR. 2 helical membrane passes run 124 to 141 and 148 to 166; these read WWRV…TLGA and EGPT…LDVF. A Selectivity filter part_2 motif is present at residues 146 to 150; the sequence is GREGP. Residues 167–176 lie on the Cytoplasmic side of the membrane; sequence RMRSAEARHT. 2 consecutive intramembrane regions (helical) follow at residues 177–189 and 193–201; these read LLAT…LSAA and PLAGILFII. Over 202 to 214 the chain is Cytoplasmic; the sequence is EEMRPQFRYNLIS. Residues 215–232 form a helical membrane-spanning segment; sequence IKAVFTGVIMSSIVFRIF. The Periplasmic portion of the chain corresponds to 233-252; sequence NGEAPIIEVGKLSDAPVNTL. A helical membrane pass occupies residues 253–281; it reads WLYLILGIIFGCVGPVFNSLVLRTQDMFQ. Residues 282–287 lie on the Cytoplasmic side of the membrane; that stretch reads RFHGGE. A helical membrane pass occupies residues 288-309; sequence IKKWVLMGGAIGGLCGILGLIE. Topologically, residues 310 to 329 are periplasmic; sequence PAAAGGGFNLIPIAAAGNFS. 2 helical membrane-spanning segments follow: residues 330-349 and 355-376; these read VGLL…LCFS and GIFA…MAAA. Positions 355–359 match the Selectivity filter part_3 motif; it reads GIFAP. Residues I356 and F357 each contribute to the chloride site. Over 377–386 the chain is Periplasmic; sequence VLFPQYHLEA. An intramembrane region (helical) is located at residues 387–401; it reads GTFAIAGMGALMAAS. The segment at residues 402–404 is an intramembrane region (note=Loop between two helices); the sequence is VRA. Positions 405–416 form an intramembrane region, helical; that stretch reads PLTGIVLVLEMT. The segment at residues 417–421 is an intramembrane region (note=Loop between two helices); sequence DNYQL. Residues 422–438 traverse the membrane as a helical segment; the sequence is ILPMIITCLGATLLAQF. Residues 439–473 lie on the Cytoplasmic side of the membrane; it reads LGGKPLYSTILARTLAKQDAEQAAKNQNAPAGENT. Y445 contacts chloride.

The protein belongs to the chloride channel (TC 2.A.49) family. ClcA subfamily. In terms of assembly, homodimer.

The protein localises to the cell inner membrane. It catalyses the reaction 2 chloride(in) + H(+)(out) = 2 chloride(out) + H(+)(in). Functionally, proton-coupled chloride transporter. Functions as antiport system and exchanges two chloride ions for 1 proton. Probably acts as an electrical shunt for an outwardly-directed proton pump that is linked to amino acid decarboxylation, as part of the extreme acid resistance (XAR) response. This chain is H(+)/Cl(-) exchange transporter ClcA, found in Salmonella typhi.